The following is a 135-amino-acid chain: S-protein homolog 20 (135 aa).

Residues 1 to 26 (MNGSSAFHIILSVTFMVFLFGGLCEA) form the signal peptide. N-linked (GlcNAc...) asparagine glycosylation occurs at Asn88.

This sequence belongs to the plant self-incompatibility (S1) protein family.

It localises to the secreted. This is S-protein homolog 20 from Arabidopsis thaliana (Mouse-ear cress).